Here is a 382-residue protein sequence, read N- to C-terminus: Galactokinase (382 aa).

34 to 37 (EHTD) contacts substrate. An ATP-binding site is contributed by 124-130 (GAGLSSS). Mg(2+) is bound by residues S130 and E162. Residue D174 is the Proton acceptor of the active site. Y223 lines the substrate pocket.

It belongs to the GHMP kinase family. GalK subfamily.

The protein resides in the cytoplasm. It carries out the reaction alpha-D-galactose + ATP = alpha-D-galactose 1-phosphate + ADP + H(+). Its pathway is carbohydrate metabolism; galactose metabolism. Functionally, catalyzes the transfer of the gamma-phosphate of ATP to D-galactose to form alpha-D-galactose-1-phosphate (Gal-1-P). The protein is Galactokinase of Salmonella schwarzengrund (strain CVM19633).